The sequence spans 206 residues: Probable GTP-binding protein EngB (206 aa).

Residues 27-201 enclose the EngB-type G domain; it reads SGIEVAFAGR…EEKLNQWYSK (175 aa). GTP contacts are provided by residues 35–42, 62–66, 80–83, 147–150, and 180–182; these read GRSNAGKS, GRTQL, DLPG, TKAD, and FSS. Serine 42 and threonine 64 together coordinate Mg(2+).

It belongs to the TRAFAC class TrmE-Era-EngA-EngB-Septin-like GTPase superfamily. EngB GTPase family. Mg(2+) serves as cofactor.

Functionally, necessary for normal cell division and for the maintenance of normal septation. The sequence is that of Probable GTP-binding protein EngB from Idiomarina loihiensis (strain ATCC BAA-735 / DSM 15497 / L2-TR).